The primary structure comprises 146 residues: Lysozyme C (146 aa).

A signal peptide spans 1-16; sequence SGKYISWEDSCSYLQL. The region spanning 17-146 is the C-type lysozyme domain; sequence QKYERCELAK…LSQWTQGCKL (130 aa). Disulfide bonds link cysteine 22–cysteine 144, cysteine 46–cysteine 132, cysteine 81–cysteine 97, and cysteine 93–cysteine 111. Active-site residues include glutamate 51 and aspartate 69.

Belongs to the glycosyl hydrolase 22 family. In terms of tissue distribution, expressed by the skin glands.

It is found in the secreted. The enzyme catalyses Hydrolysis of (1-&gt;4)-beta-linkages between N-acetylmuramic acid and N-acetyl-D-glucosamine residues in a peptidoglycan and between N-acetyl-D-glucosamine residues in chitodextrins.. In terms of biological role, lysozymes have primarily a bacteriolytic function; those in tissues and body fluids are associated with the monocyte-macrophage system and enhance the activity of immunoagents. Has antibacterial activity against the Gram-positive bacterium S.aureus and against the Gram-negative bacterium E.coli with a MIC of 1 uM and 8 uM respectively. No antifungal activity against C.albicans. This Bufo gargarizans andrewsi (Andrew's toad) protein is Lysozyme C.